The chain runs to 291 residues: HTH-type transcriptional activator AmpR (291 aa).

The 58-residue stretch at 6–63 folds into the HTH lysR-type domain; it reads LPLNSLRAFEAAARHLSFTHAAIELNVTHSAISQHVKTLEQHLNCQLFVRVSRGLMLT. Positions 23–42 form a DNA-binding region, H-T-H motif; the sequence is FTHAAIELNVTHSAISQHVK.

The protein belongs to the LysR transcriptional regulatory family.

The protein localises to the cytoplasm. This protein is a positive regulator of gene expression of cephalosporinase (AmpC). The chain is HTH-type transcriptional activator AmpR (ampR) from Enterobacter cloacae.